The chain runs to 503 residues: MLDLTYETPKPKVIAGAKHDWELVIGMEIHAQVSSNAKLFSGASTTFGAEPNSNVSFVDCAMPGMLPVINDFCVAQAVRTGLGLKAQINLVSAFDRKNYFYPDLPQGYQISQLYHPIVGEGEVLVEMGPGVARLVRIERIHLEQDAGKSIHDMDPNLSFVDFNRTGVALMEIVSRPDIRGPEEAAAYVAKLRQILRYLGTCDGNMQNGNLRADVNVSVCRPGDYERYQATQDFSHLGTRCEIKNMNSMRFIQQAIEYEARRQIAILEDGGKVVQETRLYDPDKGETRSMRSKEEAHDYRYFPDPDLLPLEIEQAWVDEIATSMPELPDAKKARFMADYGVTDYDANVLTAELDAAAFFEAVAKGRDGKQAANWVINELFGRLNKQGLTIAEAPVSAAQLGGVLDLIASGEISGKMAKDLFEILWTEGGDPAEVAAARGMKQVTDTGAIETAVDEIIAANPAQVEKAKANPKLAGWFVGQVIKATGGKANPAAVNQIVAQKLGL.

It belongs to the GatB/GatE family. GatB subfamily. Heterotrimer of A, B and C subunits.

The catalysed reaction is L-glutamyl-tRNA(Gln) + L-glutamine + ATP + H2O = L-glutaminyl-tRNA(Gln) + L-glutamate + ADP + phosphate + H(+). It carries out the reaction L-aspartyl-tRNA(Asn) + L-glutamine + ATP + H2O = L-asparaginyl-tRNA(Asn) + L-glutamate + ADP + phosphate + 2 H(+). In terms of biological role, allows the formation of correctly charged Asn-tRNA(Asn) or Gln-tRNA(Gln) through the transamidation of misacylated Asp-tRNA(Asn) or Glu-tRNA(Gln) in organisms which lack either or both of asparaginyl-tRNA or glutaminyl-tRNA synthetases. The reaction takes place in the presence of glutamine and ATP through an activated phospho-Asp-tRNA(Asn) or phospho-Glu-tRNA(Gln). This is Aspartyl/glutamyl-tRNA(Asn/Gln) amidotransferase subunit B from Cereibacter sphaeroides (strain ATCC 17025 / ATH 2.4.3) (Rhodobacter sphaeroides).